Reading from the N-terminus, the 214-residue chain is Cysteine-rich venom protein LEI1 (214 aa).

An N-terminal signal peptide occupies residues 1 to 18; it reads MIAFILLSLAAVLQQSFG. One can recognise an SCP domain in the interval 37–165; the sequence is VNMHNSLRRS…YYSYFYVCQY (129 aa). Disulfide bonds link Cys-74-Cys-152, Cys-91-Cys-166, Cys-147-Cys-163, Cys-185-Cys-192, and Cys-188-Cys-197. Residues 201–214 form the ShKT domain; it reads CTVENKFTNCNTLV.

This sequence belongs to the CRISP family. Expressed by the venom gland.

Its subcellular location is the secreted. Its function is as follows. Blocks contraction of smooth muscle elicited by high potassium-induced depolarization, but does not block caffeine-stimulated contraction. May target voltage-gated calcium channels on smooth muscle. In Leioheterodon madagascariensis (Malagasy giant hognose snake), this protein is Cysteine-rich venom protein LEI1.